The primary structure comprises 535 residues: Alpha-1,3-mannosyl-glycoprotein 4-beta-N-acetylglucosaminyltransferase A (535 aa).

Residues 1-4 (MRLR) lie on the Cytoplasmic side of the membrane. A helical; Signal-anchor for type II membrane protein transmembrane segment spans residues 5–27 (NGTVATALAFITSFLTLSWYTTW). Positions 28-63 (QNGKEKLIAYQREFLALKERLRIAEHRISQRSSELN) form a coiled coil. Residues 28 to 535 (QNGKEKLIAY…NEIHIKKATK (508 aa)) are Lumenal-facing. Asn77 and Asn458 each carry an N-linked (GlcNAc...) asparagine glycan. Ser474 carries the phosphoserine modification.

The protein belongs to the glycosyltransferase 54 family. A divalent metal cation serves as cofactor. Post-translationally, N-glycosylated.

The protein resides in the golgi apparatus membrane. It localises to the secreted. The catalysed reaction is N(4)-{beta-D-GlcNAc-(1-&gt;2)-alpha-D-Man-(1-&gt;3)-[beta-D-GlcNAc-(1-&gt;2)-alpha-D-Man-(1-&gt;6)]-beta-D-Man-(1-&gt;4)-beta-D-GlcNAc-(1-&gt;4)-beta-D-GlcNAc}-L-asparaginyl-[protein] + UDP-N-acetyl-alpha-D-glucosamine = N(4)-{beta-D-GlcNAc-(1-&gt;2)-[beta-D-GlcNAc-(1-&gt;4)]-alpha-D-Man-(1-&gt;3)-[beta-D-GlcNAc-(1-&gt;2)-alpha-D-Man-(1-&gt;6)]-beta-D-Man-(1-&gt;4)-beta-D-GlcNAc-(1-&gt;4)-beta-D-GlcNAc}-L-asparaginyl-[protein] + UDP + H(+). The enzyme catalyses an N(4)-{beta-D-GlcNAc-(1-&gt;2)-alpha-D-Man-(1-&gt;3)-[alpha-D-Man-(1-&gt;6)]-beta-D-Man-(1-&gt;4)-beta-D-GlcNAc-(1-&gt;4)-beta-D-GlcNAc}-L-asparaginyl-[protein] + UDP-N-acetyl-alpha-D-glucosamine = an N(4)-{beta-D-GlcNAc-(1-&gt;2)-[beta-D-GlcNAc-(1-&gt;4)]-alpha-D-Man-(1-&gt;3)-[alpha-D-Man-(1-&gt;6)]-beta-D-Man-(1-&gt;4)-beta-D-GlcNAc-(1-&gt;4)-beta-D-GlcNAc}-L-asparaginyl-[protein] + UDP + H(+). It carries out the reaction an N(4)-{beta-D-GlcNAc-(1-&gt;2)-alpha-D-Man-(1-&gt;3)-[beta-D-GlcNAc-(1-&gt;2)-[beta-D-GlcNAc-(1-&gt;6)]-alpha-D-Man-(1-&gt;6)]-beta-D-Man-(1-&gt;4)-beta-D-GlcNAc-(1-&gt;4)-beta-D-GlcNAc}-L-asparaginyl-[protein] + UDP-N-acetyl-alpha-D-glucosamine = an N(4)-{beta-D-GlcNAc-(1-&gt;2)-[beta-D-GlcNAc-(1-&gt;4)]-alpha-D-Man-(1-&gt;3)-[beta-D-GlcNAc-(1-&gt;2)-[beta-D-GlcNAc-(1-&gt;6)]-alpha-D-Man-(1-&gt;6)]-beta-D-Man-(1-&gt;4)-beta-D-GlcNAc-(1-&gt;4)-beta-D-GlcNAc}-L-asparaginyl-[protein] + UDP + H(+). It catalyses the reaction an N(4)-{beta-D-GlcNAc-(1-&gt;2)-alpha-D-Man-(1-&gt;3)-[beta-D-GlcNAc-(1-&gt;2)-alpha-D-Man-(1-&gt;6)]-beta-D-Man-(1-&gt;4)-beta-D-GlcNAc-(1-&gt;4)-[alpha-L-Fuc-(1-&gt;6)]-beta-D-GlcNAc}-L-asparaginyl-[protein] + UDP-N-acetyl-alpha-D-glucosamine = N(4)-{beta-D-GlcNAc-(1-&gt;2)-[beta-D-GlcNAc-(1-&gt;4)]-alpha-D-Man-(1-&gt;3)-[beta-D-GlcNAc-(1-&gt;2)-alpha-D-Man-(1-&gt;6)]-beta-D-Man-(1-&gt;4)-beta-D-GlcNAc-(1-&gt;4)-[alpha-L-Fuc-(1-&gt;6)]-beta-D-GlcNAc}-asparaginyl-[protein] + UDP + H(+). The catalysed reaction is an N(4)-{beta-D-GlcNAc-(1-&gt;2)-alpha-D-Man-(1-&gt;3)-[beta-D-Gal-(1-&gt;4)-beta-D-GlcNAc-(1-&gt;2)-alpha-D-Man-(1-&gt;6)]-beta-D-Man-(1-&gt;4)-beta-D-GlcNAc-(1-&gt;4)-beta-D-GlcNAc}-L-asparaginyl-[protein] + UDP-N-acetyl-alpha-D-glucosamine = an N(4)-{beta-D-GlcNAc-(1-&gt;2)-[beta-D-GlcNAc-(1-&gt;4)]-alpha-D-Man-(1-&gt;3)-[beta-D-Gal-(1-&gt;4)-beta-D-GlcNAc-(1-&gt;2)-alpha-D-Man-(1-&gt;6)]-beta-D-Man-(1-&gt;4)-beta-D-GlcNAc-(1-&gt;4)-beta-D-GlcNAc}-L-asparaginyl-[protein] + UDP + H(+). The enzyme catalyses N(4)-{beta-D-GlcNAc-(1-&gt;2)-alpha-D-Man-(1-&gt;3)-[alpha-D-Man-(1-&gt;3)-{alpha-D-Man-(1-&gt;6)}-alpha-D-Man-(1-&gt;6)]-beta-D-Man-(1-&gt;4)-beta-D-GlcNAc-(1-&gt;4)-beta-D-GlcNAc}-asparaginyl-[protein] + UDP-N-acetyl-alpha-D-glucosamine = N(4)-{beta-D-GlcNAc-(1-&gt;2)-[beta-D-GlcNAc-(1-&gt;4)]-alpha-D-Man-(1-&gt;3)-[alpha-D-Man-(1-&gt;3)-{alpha-D-Man-(1-&gt;6)}-alpha-D-Man-(1-&gt;6)]-beta-D-Man-(1-&gt;4)-beta-D-GlcNAc-(1-&gt;4)-beta-D-GlcNAc}-asparaginyl-[protein] + UDP + H(+). It carries out the reaction N(4)-{beta-D-GlcNAc-(1-&gt;2)-alpha-D-Man-(1-&gt;3)-beta-D-Man-(1-&gt;4)-beta-D-GlcNAc-(1-&gt;4)-beta-D-GlcNAc}-asparaginyl-[protein] + UDP-N-acetyl-alpha-D-glucosamine = N(4)-{beta-D-GlcNAc-(1-&gt;2)-[beta-D-GlcNAc-(1-&gt;4)]-alpha-D-Man-(1-&gt;3)-beta-D-Man-(1-&gt;4)-beta-D-GlcNAc-(1-&gt;4)-beta-D-GlcNAc}-asparaginyl-[protein] + UDP + H(+). It participates in protein modification; protein glycosylation. With respect to regulation, inhibited by UDP. Its function is as follows. Glycosyltransferase that catalyze the transfer of GlcNAc from UDP-GlcNAc to the GlcNAcbeta1-2Manalpha1-3 arm of the core structure of N-linked glycans through a beta1-4 linkage and participates in the production of tri- and tetra-antennary N-linked sugar chains. Involved in glucose transport by mediating SLC2A2/GLUT2 glycosylation, thereby controlling cell-surface expression of SLC2A2 in pancreatic beta cells. This is Alpha-1,3-mannosyl-glycoprotein 4-beta-N-acetylglucosaminyltransferase A from Macaca fascicularis (Crab-eating macaque).